The chain runs to 237 residues: Peptidase E (237 aa).

Catalysis depends on charge relay system residues Ser-122, Asp-137, and His-159.

Belongs to the peptidase S51 family.

It is found in the cytoplasm. It carries out the reaction Dipeptidase E catalyzes the hydrolysis of dipeptides Asp-|-Xaa. It does not act on peptides with N-terminal Glu, Asn or Gln, nor does it cleave isoaspartyl peptides.. In terms of biological role, hydrolyzes dipeptides containing N-terminal aspartate residues. May play a role in allowing the cell to use peptide aspartate to spare carbon otherwise required for the synthesis of the aspartate family of amino acids. This chain is Peptidase E, found in Shewanella baltica (strain OS185).